We begin with the raw amino-acid sequence, 99 residues long: Carboxysome shell vertex protein CcmL (99 aa).

The region spanning 1-83 (MRIAKVRGTV…VDAAVIAIID (83 aa)) is the BMV domain.

Belongs to the CcmL/EutN family. CcmL subfamily. As to quaternary structure, homopentamer. Interacts with full-length CcmM.

It is found in the carboxysome. Its function is as follows. Probably forms vertices in the carboxysome, a polyhedral inclusion where RuBisCO (ribulose bisphosphate carboxylase, rbcL-rbcS) is sequestered. Has been modeled to induce curvature upon insertion into an otherwise flat hexagonal molecular layer of CcmK subunits. Beta-carboxysome assembly initiates when soluble RuBisCO is condensed into a liquid matrix in a pre-carboxysome by the RbcS-like domains of probably both CcmM58 and CcmM35. CcmN interacts with the N-terminus of CcmM58, and then recruits the CcmK2 major shell protein via CcmN's encapsulation peptide. Shell formation requires CcmK proteins and CcmO. CcmL caps the otherwise elongated carboxysome. Once fully encapsulated carboxysomes are formed, they migrate within the cell probably via interactions with the cytoskeleton. This is Carboxysome shell vertex protein CcmL from Synechococcus elongatus (strain ATCC 33912 / PCC 7942 / FACHB-805) (Anacystis nidulans R2).